Here is a 239-residue protein sequence, read N- to C-terminus: tRNA (guanine-N(7)-)-methyltransferase (239 aa).

Residues glutamate 68, glutamate 93, aspartate 120, and aspartate 143 each coordinate S-adenosyl-L-methionine. Residue aspartate 143 is part of the active site. Residues lysine 147, aspartate 180, and 217–220 (TKFE) each bind substrate.

The protein belongs to the class I-like SAM-binding methyltransferase superfamily. TrmB family.

The enzyme catalyses guanosine(46) in tRNA + S-adenosyl-L-methionine = N(7)-methylguanosine(46) in tRNA + S-adenosyl-L-homocysteine. It functions in the pathway tRNA modification; N(7)-methylguanine-tRNA biosynthesis. In terms of biological role, catalyzes the formation of N(7)-methylguanine at position 46 (m7G46) in tRNA. This is tRNA (guanine-N(7)-)-methyltransferase from Vibrio parahaemolyticus serotype O3:K6 (strain RIMD 2210633).